We begin with the raw amino-acid sequence, 542 residues long: Membrane protein insertase YidC (542 aa).

Transmembrane regions (helical) follow at residues Leu-7–Phe-27, Phe-338–Val-358, Met-417–Phe-437, Leu-455–Leu-475, and Phe-494–Trp-514.

The protein belongs to the OXA1/ALB3/YidC family. Type 1 subfamily. In terms of assembly, interacts with the Sec translocase complex via SecD. Specifically interacts with transmembrane segments of nascent integral membrane proteins during membrane integration.

It localises to the cell inner membrane. Functionally, required for the insertion and/or proper folding and/or complex formation of integral membrane proteins into the membrane. Involved in integration of membrane proteins that insert both dependently and independently of the Sec translocase complex, as well as at least some lipoproteins. Aids folding of multispanning membrane proteins. The sequence is that of Membrane protein insertase YidC from Actinobacillus pleuropneumoniae serotype 3 (strain JL03).